The following is a 343-amino-acid chain: Heat-inducible transcription repressor HrcA (343 aa).

Belongs to the HrcA family.

In terms of biological role, negative regulator of class I heat shock genes (grpE-dnaK-dnaJ and groELS operons). Prevents heat-shock induction of these operons. This is Heat-inducible transcription repressor HrcA from Clostridium botulinum (strain Eklund 17B / Type B).